We begin with the raw amino-acid sequence, 474 residues long: Trigger factor (474 aa).

The 88-residue stretch at 174-261 (GDIAVVSFKG…LKDLKEKELP (88 aa)) folds into the PPIase FKBP-type domain. A disordered region spans residues 435–474 (VKEKTTKTSKATKTSKTTKATKTASKTTKTTKTQNKKEKK). Residues 442 to 467 (TSKATKTSKTTKATKTASKTTKTTKT) show a composition bias toward low complexity.

This sequence belongs to the FKBP-type PPIase family. Tig subfamily.

Its subcellular location is the cytoplasm. The enzyme catalyses [protein]-peptidylproline (omega=180) = [protein]-peptidylproline (omega=0). Its function is as follows. Involved in protein export. Acts as a chaperone by maintaining the newly synthesized protein in an open conformation. Functions as a peptidyl-prolyl cis-trans isomerase. The chain is Trigger factor from Prochlorococcus marinus (strain AS9601).